The sequence spans 151 residues: Putative membrane protein ORF10 (151 aa).

2 helical membrane-spanning segments follow: residues 7-23 and 107-123; these read LCLAFGVTLIVIVGVVV and GLVAAFNGFWLSFIIMY.

The protein resides in the membrane. In Ictalurid herpesvirus 1 (strain Auburn) (IcHV-1), this protein is Putative membrane protein ORF10 (ORF10).